The chain runs to 463 residues: Chaperone SurA (463 aa).

The N-terminal stretch at 1-25 (MTKPFSVVLASLLAITSTVSPLASA) is a signal peptide. PpiC domains lie at 174-276 (GSQY…KLVE) and 289-388 (VTEY…QRVG). Disordered stretches follow at residues 329-348 (ATAK…GDLG) and 431-463 (YRTG…KPTR). Residues 441–450 (ATAAPAKSPD) show a composition bias toward low complexity. Over residues 451–463 (PAAPSPPPAKPTR) the composition is skewed to pro residues.

The protein localises to the periplasm. The catalysed reaction is [protein]-peptidylproline (omega=180) = [protein]-peptidylproline (omega=0). In terms of biological role, chaperone involved in the correct folding and assembly of outer membrane proteins. Recognizes specific patterns of aromatic residues and the orientation of their side chains, which are found more frequently in integral outer membrane proteins. May act in both early periplasmic and late outer membrane-associated steps of protein maturation. The polypeptide is Chaperone SurA (Xanthomonas axonopodis pv. citri (strain 306)).